A 380-amino-acid polypeptide reads, in one-letter code: Ubiquitin-like protein 7 (380 aa).

A Ubiquitin-like domain is found at 18–98; sequence APKSILQLPE…VLRKSWPEPD (81 aa). Residues 200-313 form a disordered region; it reads TPMPGADSSS…SSGVQSGTPI (114 aa). Over residues 206-221 the composition is skewed to low complexity; that stretch reads DSSSRSMPSSSYRDMP. Position 230 is a phosphoserine (serine 230). 2 stretches are compositionally biased toward low complexity: residues 239-253 and 270-293; these read STRS…SSRP and SELA…TPGT. Residues 294 to 313 are compositionally biased toward polar residues; it reads QGHSSGTSPMSSGVQSGTPI. The UBA domain maps to 333–377; that stretch reads SLQIQWQPQLQQLRDMGIQDDELSLRALQATGGDIQAALELIFAG.

As to quaternary structure, binds ubiquitin. Interacts with MAVS; this interaction enhances TRIM21-dependent 'Lys-27'-linked polyubiquitination of MAVS. Post-translationally, deubiquitinated by OTUD4 which stabilizes UBL7 expression.

Interferon-stimulated protein that positively regulates RNA virus-triggered innate immune signaling. Mechanistically, promotes 'Lys-27'-linked polyubiquitination of MAVS through TRIM21 leading to enhanced the IFN signaling pathway. This Mus musculus (Mouse) protein is Ubiquitin-like protein 7 (Ubl7).